The primary structure comprises 168 residues: Peptidoglycan-associated lipoprotein (168 aa).

Residues 1 to 24 (MRRIQSIARSPIAIALFMSLAVAG) form the signal peptide. Cysteine 25 is lipidated: N-palmitoyl cysteine. The S-diacylglycerol cysteine moiety is linked to residue cysteine 25. The region spanning 51–167 (QDFTVNVGDR…RAVTVLNGAG (117 aa)) is the OmpA-like domain.

This sequence belongs to the Pal lipoprotein family. As to quaternary structure, the Tol-Pal system is composed of five core proteins: the inner membrane proteins TolA, TolQ and TolR, the periplasmic protein TolB and the outer membrane protein Pal. They form a network linking the inner and outer membranes and the peptidoglycan layer. In terms of processing, the N-terminus is blocked.

Its subcellular location is the cell outer membrane. In terms of biological role, part of the Tol-Pal system, which plays a role in outer membrane invagination during cell division and is important for maintaining outer membrane integrity. The chain is Peptidoglycan-associated lipoprotein from Brucella abortus biovar 1 (strain 9-941).